The sequence spans 210 residues: Imidazole glycerol phosphate synthase subunit HisH (210 aa).

The Glutamine amidotransferase type-1 domain occupies 1-205; that stretch reads MIAVINYGAG…VELALSRGSG (205 aa). C79 functions as the Nucleophile in the catalytic mechanism. Catalysis depends on residues H180 and E182.

As to quaternary structure, heterodimer of HisH and HisF.

The protein localises to the cytoplasm. The enzyme catalyses 5-[(5-phospho-1-deoxy-D-ribulos-1-ylimino)methylamino]-1-(5-phospho-beta-D-ribosyl)imidazole-4-carboxamide + L-glutamine = D-erythro-1-(imidazol-4-yl)glycerol 3-phosphate + 5-amino-1-(5-phospho-beta-D-ribosyl)imidazole-4-carboxamide + L-glutamate + H(+). It catalyses the reaction L-glutamine + H2O = L-glutamate + NH4(+). It participates in amino-acid biosynthesis; L-histidine biosynthesis; L-histidine from 5-phospho-alpha-D-ribose 1-diphosphate: step 5/9. In terms of biological role, IGPS catalyzes the conversion of PRFAR and glutamine to IGP, AICAR and glutamate. The HisH subunit catalyzes the hydrolysis of glutamine to glutamate and ammonia as part of the synthesis of IGP and AICAR. The resulting ammonia molecule is channeled to the active site of HisF. This Herpetosiphon aurantiacus (strain ATCC 23779 / DSM 785 / 114-95) protein is Imidazole glycerol phosphate synthase subunit HisH.